The primary structure comprises 157 residues: Serine-protein kinase RsbW (157 aa).

Belongs to the anti-sigma-factor family.

It catalyses the reaction L-seryl-[protein] + ATP = O-phospho-L-seryl-[protein] + ADP + H(+). The catalysed reaction is L-threonyl-[protein] + ATP = O-phospho-L-threonyl-[protein] + ADP + H(+). In terms of biological role, negative regulator of sigma-B activity. Phosphorylates and inactivates its specific antagonist protein, RsbV. Upon phosphorylation of RsbV, RsbW is released and binds to sigma-B, thereby blocking its ability to form an RNA polymerase holoenzyme (E-sigma-B). The chain is Serine-protein kinase RsbW from Listeria monocytogenes serovar 1/2a (strain ATCC BAA-679 / EGD-e).